The sequence spans 688 residues: G-protein coupled receptor-associated protein LMBRD2 (688 aa).

Topologically, residues 1–3 are extracellular; that stretch reads MSG. A helical membrane pass occupies residues 4 to 21; sequence AALGLEIVFVFFLALFLL. At 22-32 the chain is on the cytoplasmic side; sequence HRYGDFKKQHR. Residues 33 to 53 traverse the membrane as a helical segment; the sequence is LVIIATLLAWYLCFLIVFILP. At 54-99 the chain is on the extracellular side; it reads LDVSTTIYNRCKLAVNSSPAESNSSFVTLAPSKQQCFKPWSYIPNG. Asn76 carries N-linked (GlcNAc...) asparagine glycosylation. The helical transmembrane segment at 100–120 threads the bilayer; sequence IMPIFWRVVYWTSQFLTWILL. Over 121–144 the chain is Cytoplasmic; sequence PFMQSYARSGGFSITGKIKTALIE. The chain crosses the membrane as a helical span at residues 145–165; sequence NAIYYGTYLLIFGAFLIYVAV. The Extracellular segment spans residues 166-180; sequence NPKFNLQWNQLQTIG. A helical transmembrane segment spans residues 181-201; sequence IAAANTWGLFLLVLLLGYGLV. At 202–381 the chain is on the cytoplasmic side; the sequence is EIPRSHWNGA…ECLLRPWFYR (180 aa). A coiled-coil region spans residues 222-254; the sequence is FKAAKLMTEKADAEENLEDIMEEVRKVSESIKY. The helical transmembrane segment at 382 to 402 threads the bilayer; that stretch reads VLAVVLAAFSVIVVWSECTFF. The Extracellular segment spans residues 403 to 426; it reads STRPVLSLVAVFIQLAEKTYNYIY. The chain crosses the membrane as a helical span at residues 427–447; it reads IEMACFLTIFFLSICVYSTVF. Over 448–467 the chain is Cytoplasmic; that stretch reads RIRVFNYYYLASHHQTDAYS. Residues 468-488 form a helical membrane-spanning segment; it reads LLFSGMLFCRLTPPLCLNFLG. The Extracellular segment spans residues 489-515; that stretch reads LTHMDATISHTDAQPTAYTSIMGSMKV. A helical transmembrane segment spans residues 516-536; it reads LSFIADGFYIYYPMLVVILCI. Over 537-688 the chain is Cytoplasmic; that stretch reads ATYFSLGTRC…MSRSRIFEDV (152 aa). The span at 600-617 shows a compositional bias: basic and acidic residues; sequence REDSTRNRVVHTEQKESS. Residues 600–673 form a disordered region; that stretch reads REDSTRNRVV…ESDSGRYQPG (74 aa). Residues 618–634 show a composition bias toward polar residues; that stretch reads FSETNTNRPLSKYTRTN. Residues 635 to 644 are compositionally biased toward basic and acidic residues; that stretch reads GRTERDRIEL.

The protein belongs to the LIMR family.

The protein localises to the cell membrane. May associate with G-protein coupled receptors and regulate downstream signaling pathways. The chain is G-protein coupled receptor-associated protein LMBRD2 from Gallus gallus (Chicken).